A 370-amino-acid polypeptide reads, in one-letter code: tRNA pseudouridine synthase D (370 aa).

The active-site Nucleophile is the Asp-77. Residues 152 to 297 form the TRUD domain; it reads GVPNYFGEQR…LEQERRPLLL (146 aa).

This sequence belongs to the pseudouridine synthase TruD family.

It carries out the reaction uridine(13) in tRNA = pseudouridine(13) in tRNA. Functionally, responsible for synthesis of pseudouridine from uracil-13 in transfer RNAs. The protein is tRNA pseudouridine synthase D of Shewanella oneidensis (strain ATCC 700550 / JCM 31522 / CIP 106686 / LMG 19005 / NCIMB 14063 / MR-1).